A 461-amino-acid chain; its full sequence is Piperine synthase (461 aa).

Residues H168 and D387 each act as proton acceptor in the active site. The Microbody targeting signal signature appears at 459-461; sequence SRM.

This sequence belongs to the plant acyltransferase family. Monomer. As to expression, confined to immature fruits perisperm. Also detectable in roots.

The protein localises to the cytoplasm. It catalyses the reaction piperidine + (E,E)-piperoyl-CoA = piperine + CoA + H(+). The catalysed reaction is pyrrolidine + (E,E)-piperoyl-CoA = piperyline + CoA + H(+). The enzyme catalyses (E,E)-piperoyl-CoA + 2-methylpropan-1-amine = (E,E)-piperlonguminine + CoA + H(+). The protein operates within aromatic compound metabolism. In terms of biological role, involved in the biosynthesis of aromatic piperamides natural products such as piperine (1-piperoyl-piperidine), the pungent principle contributing, together with several terpenoids, to the aromatic properties of black pepper fruits, and displaying numerous pharmacological activities such as antiproliferative, antitumor, antiangiogenesis, antioxidant, antidiabetic, antiobesity, cardioprotective, antimicrobial, antiaging, and immunomodulatory effects. Mediates mainly the conversion of piperidine and piperoyl-CoA to piperine. Can also use pyrrolidine and isobutylamine as acceptors and 3,4-methylenedioxycinnamoyl-CoA as an alternative CoA-donor with a lower efficiency. The chain is Piperine synthase from Piper nigrum (Black pepper).